Reading from the N-terminus, the 730-residue chain is Polyribonucleotide nucleotidyltransferase (730 aa).

Positions 489 and 495 each coordinate Mg(2+). One can recognise a KH domain in the interval 556–615 (PRIEVMKIAVDKIREVIGSGGKVIREIVEKTGAKINIEDDGTIKIASASGDAIKAAINWI). Residues 625–693 (GQIYEGTVVK…ERGKTRLSMK (69 aa)) form the S1 motif domain. Residues 700–730 (GEDLEAKAKAERDAARAAAPAATGDEAGAAE) form a disordered region. Basic and acidic residues predominate over residues 703-714 (LEAKAKAERDAA). A compositionally biased stretch (low complexity) spans 715-730 (RAAAPAATGDEAGAAE).

This sequence belongs to the polyribonucleotide nucleotidyltransferase family. It depends on Mg(2+) as a cofactor.

The protein localises to the cytoplasm. The enzyme catalyses RNA(n+1) + phosphate = RNA(n) + a ribonucleoside 5'-diphosphate. Its function is as follows. Involved in mRNA degradation. Catalyzes the phosphorolysis of single-stranded polyribonucleotides processively in the 3'- to 5'-direction. This chain is Polyribonucleotide nucleotidyltransferase, found in Xanthobacter autotrophicus (strain ATCC BAA-1158 / Py2).